Consider the following 129-residue polypeptide: MKSVQLCFLFCCWRAICCKSCELTNITITVEKEECRFCISINTTWCAGYCYTRDLVYKDPARPNIQKICTFKELAYETVKVPGCAHQADSLYTYPVATECHCGKCDSDSTDCTVRGLGPSYCSFNEMKE.

Residues 1–20 (MKSVQLCFLFCCWRAICCKS) form the signal peptide. Cystine bridges form between cysteine 21-cysteine 69, cysteine 35-cysteine 84, cysteine 38-cysteine 122, cysteine 46-cysteine 100, cysteine 50-cysteine 102, and cysteine 105-cysteine 112. N-linked (GlcNAc...) asparagine glycans are attached at residues asparagine 25 and asparagine 42.

It belongs to the glycoprotein hormones subunit beta family. As to quaternary structure, heterodimer. The active follitropin is a heterodimer composed of an alpha chain/CGA shared with other hormones and a unique beta chain/FSHB shown here.

The protein localises to the secreted. Its function is as follows. Together with the alpha chain CGA constitutes follitropin, the follicle-stimulating hormone, and provides its biological specificity to the hormone heterodimer. Binds FSHR, a G protein-coupled receptor, on target cells to activate downstream signaling pathways. Follitropin is involved in follicle development and spermatogenesis in reproductive organs. The protein is Follitropin subunit beta (FSHB) of Ailuropoda melanoleuca (Giant panda).